A 47-amino-acid chain; its full sequence is Glyceraldehyde-3-phosphate dehydrogenase, cytosolic (47 aa).

The protein belongs to the glyceraldehyde-3-phosphate dehydrogenase family. Homotetramer.

It is found in the cytoplasm. It carries out the reaction D-glyceraldehyde 3-phosphate + phosphate + NAD(+) = (2R)-3-phospho-glyceroyl phosphate + NADH + H(+). Its pathway is carbohydrate degradation; glycolysis; pyruvate from D-glyceraldehyde 3-phosphate: step 1/5. The polypeptide is Glyceraldehyde-3-phosphate dehydrogenase, cytosolic (Pseudotsuga menziesii (Douglas-fir)).